Consider the following 68-residue polypeptide: DNA-directed RNA polymerase subunit omega (68 aa).

Belongs to the RNA polymerase subunit omega family. As to quaternary structure, the RNAP catalytic core consists of 2 alpha, 1 beta, 1 beta' and 1 omega subunit. When a sigma factor is associated with the core the holoenzyme is formed, which can initiate transcription.

The enzyme catalyses RNA(n) + a ribonucleoside 5'-triphosphate = RNA(n+1) + diphosphate. Functionally, promotes RNA polymerase assembly. Latches the N- and C-terminal regions of the beta' subunit thereby facilitating its interaction with the beta and alpha subunits. This chain is DNA-directed RNA polymerase subunit omega, found in Brevibacillus brevis (strain 47 / JCM 6285 / NBRC 100599).